The chain runs to 534 residues: CTP synthase (534 aa).

The amidoligase domain stretch occupies residues 1 to 267; the sequence is MTKYIFVTGG…DQIVCDHLKL (267 aa). S13 contacts CTP. S13 lines the UTP pocket. Residue 14–19 participates in ATP binding; the sequence is SIGKGI. L-glutamine is bound at residue Y54. D71 lines the ATP pocket. 2 residues coordinate Mg(2+): D71 and E141. CTP contacts are provided by residues 148-150, 188-193, and K224; these read DIE and KTKPTQ. Residues 188–193 and K224 each bind UTP; that span reads KTKPTQ. Residues 292 to 534 enclose the Glutamine amidotransferase type-1 domain; the sequence is KIALVGKYVE…FVTAAVENAK (243 aa). Residue G354 coordinates L-glutamine. The active-site Nucleophile; for glutamine hydrolysis is the C381. L-glutamine contacts are provided by residues 382-385, E405, and R463; that span reads LGMQ. Catalysis depends on residues H508 and E510.

It belongs to the CTP synthase family. Homotetramer.

The enzyme catalyses UTP + L-glutamine + ATP + H2O = CTP + L-glutamate + ADP + phosphate + 2 H(+). It catalyses the reaction L-glutamine + H2O = L-glutamate + NH4(+). The catalysed reaction is UTP + NH4(+) + ATP = CTP + ADP + phosphate + 2 H(+). Its pathway is pyrimidine metabolism; CTP biosynthesis via de novo pathway; CTP from UDP: step 2/2. With respect to regulation, allosterically activated by GTP, when glutamine is the substrate; GTP has no effect on the reaction when ammonia is the substrate. The allosteric effector GTP functions by stabilizing the protein conformation that binds the tetrahedral intermediate(s) formed during glutamine hydrolysis. Inhibited by the product CTP, via allosteric rather than competitive inhibition. Its function is as follows. Catalyzes the ATP-dependent amination of UTP to CTP with either L-glutamine or ammonia as the source of nitrogen. Regulates intracellular CTP levels through interactions with the four ribonucleotide triphosphates. This Streptococcus thermophilus (strain ATCC BAA-250 / LMG 18311) protein is CTP synthase.